The following is a 368-amino-acid chain: Glycoprotein UL18 (368 aa).

The N-terminal stretch at 1–18 (MMTMWCLTLFVLWMLRVV) is a signal peptide. The interval 19-114 (GMHVLRYGYT…EIALGYRSQS (96 aa)) is alpha-1-like. 13 N-linked (GlcNAc...) asparagine; by host glycosylation sites follow: asparagine 56, asparagine 66, asparagine 74, asparagine 95, asparagine 123, asparagine 127, asparagine 150, asparagine 167, asparagine 177, asparagine 193, asparagine 240, asparagine 282, and asparagine 291. An alpha-2-like region spans residues 115-208 (VLTWTHECNT…VIYSGFQPPV (94 aa)). The segment at 209–303 (THPVVKGGVR…VEIPISVTSP (95 aa)) is alpha-3-like. The chain crosses the membrane as a helical span at residues 321 to 342 (YNTMTISSVLLALLLCALLFAF).

As to quaternary structure, interacts with host LILRB1.

It localises to the host membrane. Functionally, plays a role in the protection against host NK cell cytotoxicity by interacting with and modulating the activity of the host inhibitory leukocyte Ig-like receptor 1/LILRB1, which is expressed on monocytes, dendritic cells, as well as subsets of T and NK cells. UL18 exerts an inhibitory effect on LIR-1+ NK cells, while it stimulates LIR-1- NK cell. These modulations prevent lysis of the infected cells by NK cells. The sequence is that of Glycoprotein UL18 (H301) from Homo sapiens (Human).